Consider the following 721-residue polypeptide: Probable acyl-activating enzyme 17, peroxisomal (721 aa).

The Microbody targeting signal signature appears at Ser-719–Leu-721.

It belongs to the ATP-dependent AMP-binding enzyme family. Expressed in leaves, stems and developing seeds.

Its subcellular location is the peroxisome. May act as an acid--thiol ligase that activates carboxylic acids by forming acyl-CoAs. The polypeptide is Probable acyl-activating enzyme 17, peroxisomal (AAE17) (Arabidopsis thaliana (Mouse-ear cress)).